The following is an 802-amino-acid chain: Spondin-1 (802 aa).

An N-terminal signal peptide occupies residues 1 to 23; the sequence is MAARLRPLALRLLARTFPLVARG. Residues 24 to 189 form the Reelin domain; the sequence is FSDETLEKAA…DSASEGVTDK (166 aa). 17 cysteine pairs are disulfide-bonded: C39/C123, C151/C177, C194/C331, C195/C335, C197/C410, C438/C475, C449/C484, C454/C489, C497/C533, C508/C512, C543/C549, C554/C590, C565/C569, C600/C605, C610/C645, C621/C625, and C655/C660. In terms of domain architecture, Spondin spans 190–383; sequence PTLDCCACGT…LTSLDHPQSP (194 aa). A glycan (N-linked (GlcNAc...) asparagine) is linked at N209. Residues D320, D349, and D353 each contribute to the Ca(2+) site. 6 TSP type-1 domains span residues 437 to 490, 496 to 550, 553 to 606, 609 to 661, 663 to 716, and 749 to 801; these read TCIY…PGCS, TCMM…EECS, SCLV…PECH, PCLL…PECP, DCEL…RKCL, and VCRL…NVHP. N676 carries an N-linked (GlcNAc...) asparagine glycan.

The protein resides in the secreted. Its subcellular location is the extracellular space. It localises to the extracellular matrix. Cell adhesion protein that promotes the attachment of spinal cord and sensory neuron cells and the outgrowth of neurites in vitro. May contribute to the growth and guidance of axons in both the spinal cord and the PNS. Somite-derived spondin 1 is an inhibitory signal involved in patterning the segmental migration of neural crest cells and their topographical segregation within the rostral somites in vitro. May be required to prevent the lateral drifting of the commissural axons after having crossed the floor plate. The sequence is that of Spondin-1 (SPON1) from Gallus gallus (Chicken).